We begin with the raw amino-acid sequence, 345 residues long: Phosphoribosylformylglycinamidine cyclo-ligase (345 aa).

This sequence belongs to the AIR synthase family.

It localises to the cytoplasm. The catalysed reaction is 2-formamido-N(1)-(5-O-phospho-beta-D-ribosyl)acetamidine + ATP = 5-amino-1-(5-phospho-beta-D-ribosyl)imidazole + ADP + phosphate + H(+). It functions in the pathway purine metabolism; IMP biosynthesis via de novo pathway; 5-amino-1-(5-phospho-D-ribosyl)imidazole from N(2)-formyl-N(1)-(5-phospho-D-ribosyl)glycinamide: step 2/2. The polypeptide is Phosphoribosylformylglycinamidine cyclo-ligase (Aeromonas hydrophila subsp. hydrophila (strain ATCC 7966 / DSM 30187 / BCRC 13018 / CCUG 14551 / JCM 1027 / KCTC 2358 / NCIMB 9240 / NCTC 8049)).